The following is a 493-amino-acid chain: Glutamyl-tRNA(Gln) amidotransferase subunit A (493 aa).

Active-site charge relay system residues include K78 and S158. S182 functions as the Acyl-ester intermediate in the catalytic mechanism.

It belongs to the amidase family. GatA subfamily. As to quaternary structure, heterotrimer of A, B and C subunits.

The enzyme catalyses L-glutamyl-tRNA(Gln) + L-glutamine + ATP + H2O = L-glutaminyl-tRNA(Gln) + L-glutamate + ADP + phosphate + H(+). Its function is as follows. Allows the formation of correctly charged Gln-tRNA(Gln) through the transamidation of misacylated Glu-tRNA(Gln) in organisms which lack glutaminyl-tRNA synthetase. The reaction takes place in the presence of glutamine and ATP through an activated gamma-phospho-Glu-tRNA(Gln). The sequence is that of Glutamyl-tRNA(Gln) amidotransferase subunit A from Rickettsia rickettsii (strain Iowa).